Reading from the N-terminus, the 552-residue chain is MSEKQVVGILGGGQLGRMMVEAAHRLNIKCIILDAANSPAKQIDGGREHIDASFTDPDAIVELSKKCTLLTTEIEHINTDALAAVTKSVAVEPSPATLRCIQDKYLQKQHLQVFKIALPEFCDAPDQESVEKAGQEFGYPFVLKSKTLAYDGRGNYVVHQPSEIPTAIKALGDRPLYVEKFVPFSMEIAVMVVRSLDGKVYAYPTTETIQKDNVCHLVYAPARLPFSIQQRAQTLAMDAVRTFEGAGIYGVEMFVLQDGETILLNEIAPRPHNSGHYTIEACPTSQFEAHLRAICGLPFSEINTQLSTSTTHALMVNILGTDDPDYVSKIAKRSLSIPGATLHLYGKAESRKGRKMGHVTIISDSPQECERRYQMLLDVKDPVESPVVGIIMGSDSDLSKMKDAAVILDEFKVPYELTIVSAHRTPDRMVTYARTAASRGLRVIIAGAGGAAHLPGMVAAMTPLPVIGVPVKGSTLDGVDSLHSIVQMPRGVPVATVAINNSQNAGILACRILATFQPSLLAAMESFMDNMKEIVLEKADKLEKVGWKNYSA.

An ATP-grasp domain is found at 108-295; that stretch reads KQHLQVFKIA…QFEAHLRAIC (188 aa). 134–189 lines the ATP pocket; that stretch reads GQEFGYPFVLKSKTLAYDGRGNYVVHQPSEIPTAIKALGDRPLYVEKFVPFSMEIA.

In the C-terminal section; belongs to the AIR carboxylase family. Class I subfamily.

The catalysed reaction is 5-amino-1-(5-phospho-D-ribosyl)imidazole-4-carboxylate + H(+) = 5-amino-1-(5-phospho-beta-D-ribosyl)imidazole + CO2. Its pathway is purine metabolism; IMP biosynthesis via de novo pathway; 5-amino-1-(5-phospho-D-ribosyl)imidazole-4-carboxylate from 5-amino-1-(5-phospho-D-ribosyl)imidazole (carboxylase route): step 1/1. The chain is Phosphoribosylaminoimidazole carboxylase (ade6) from Schizosaccharomyces pombe (strain 972 / ATCC 24843) (Fission yeast).